We begin with the raw amino-acid sequence, 279 residues long: Putative pyruvate, phosphate dikinase regulatory protein (279 aa).

153–160 (GISRTSKT) is a binding site for ADP.

Belongs to the pyruvate, phosphate/water dikinase regulatory protein family. PDRP subfamily.

It catalyses the reaction N(tele)-phospho-L-histidyl/L-threonyl-[pyruvate, phosphate dikinase] + ADP = N(tele)-phospho-L-histidyl/O-phospho-L-threonyl-[pyruvate, phosphate dikinase] + AMP + H(+). The enzyme catalyses N(tele)-phospho-L-histidyl/O-phospho-L-threonyl-[pyruvate, phosphate dikinase] + phosphate + H(+) = N(tele)-phospho-L-histidyl/L-threonyl-[pyruvate, phosphate dikinase] + diphosphate. Bifunctional serine/threonine kinase and phosphorylase involved in the regulation of the pyruvate, phosphate dikinase (PPDK) by catalyzing its phosphorylation/dephosphorylation. The protein is Putative pyruvate, phosphate dikinase regulatory protein of Brucella melitensis biotype 2 (strain ATCC 23457).